Here is a 533-residue protein sequence, read N- to C-terminus: MNRRRTMLLLICLCATFCLMTQLGAANVVLMGTNLTLSFDDVEASFAPGVKGSGFEGVVYTAEPLDACSPLTSKAEKGPPSPFALIIRGGCTFDEKVKNAQDAGFKAAIVYDNENSGVLISMAGSSGGIHIYAVFISKASGEVLKKFSGHTDVEVWILPAFENSAWSIMAISFISLLAMSAVLATCFFVRRHHIRRDRPRIPEAREFHGMSSQLVKAMPSLIFTKVQEDNCTSSMCAICLEDYNVGEKLRVLPCRHKFHAACVDLWLTTWRTFCPVCKRDASTGIPDPPASETTPLLSSAVRLPSQSSSFRSSVAASPPRPISRRPSSQSISRIYAASGTPNSPNPIRSFTNSTAMSISRSNVDLSNMSSRPRASHLASAHSLVGSHLSPPINIRYASPHMSHSGYASPSPHVSSSYVSNSGYGSSSYYLGSSSQHRSYLRRCGESGPSLSTMAPQSPQQSQLRHGGESDLNLAGASSGQSFRQSYLRHCADSEVNLAGASSGQSFRQSYLRHCADSDASLSAMASAQSLPGC.

The first 26 residues, 1 to 26, serve as a signal peptide directing secretion; sequence MNRRRTMLLLICLCATFCLMTQLGAA. The Lumenal segment spans residues 27–167; sequence NVVLMGTNLT…LPAFENSAWS (141 aa). Asn-34 is a glycosylation site (N-linked (GlcNAc...) asparagine). An intrachain disulfide couples Cys-68 to Cys-91. In terms of domain architecture, PA spans 84–145; it reads ALIIRGGCTF…ISKASGEVLK (62 aa). Residues 168–188 form a helical membrane-spanning segment; sequence IMAISFISLLAMSAVLATCFF. The Cytoplasmic segment spans residues 189–533; that stretch reads VRRHHIRRDR…MASAQSLPGC (345 aa). Residues 236–278 form an RING-type; atypical zinc finger; sequence CAICLEDYNVGEKLRVLPCRHKFHAACVDLWLTTWRTFCPVCK. Disordered regions lie at residues 309–329 and 440–476; these read SFRS…PSSQ and LRRC…LAGA. Residues 448–463 show a composition bias toward polar residues; it reads PSLSTMAPQSPQQSQL.

It is found in the prevacuolar compartment membrane. Its subcellular location is the protein storage vacuole membrane. It localises to the golgi apparatus membrane. In terms of biological role, involved in the trafficking of vacuolar proteins. Functions probably as a sorting receptor for protein trafficking to the protein storage vacuole (PSV) by binding the C-terminal vacuolar sorting determinant (VSD) of vacuolar-sorted proteins. The sequence is that of Receptor homology region, transmembrane domain- and RING domain-containing protein 1 from Oryza sativa subsp. japonica (Rice).